The primary structure comprises 466 residues: Vimentin (466 aa).

Residues 1–13 (MSTRSVSSSSYRR) show a composition bias toward low complexity. The interval 1–32 (MSTRSVSSSSYRRMFGGPGTGSRPSSTRSYVT) is disordered. Ser2 bears the N-acetylserine mark. Residues 2-95 (STRSVSSSSY…FSLADAINTE (94 aa)) are head. Phosphoserine is present on residues Ser5, Ser7, Ser8, Ser9, and Ser10. The O-linked (GlcNAc) serine; alternate glycan is linked to Ser7. Position 20 is a phosphothreonine (Thr20). The segment covering 21 to 32 (GSRPSSTRSYVT) has biased composition (low complexity). Residues Ser25 and Ser26 each carry the phosphoserine modification. Thr33 is a glycosylation site (O-linked (GlcNAc) threonine). Residues Ser34, Ser39, Ser42, Ser47, Ser49, and Ser51 each carry the phosphoserine modification. A glycan (O-linked (GlcNAc) serine; alternate) is linked at Ser34. Residue Tyr53 is modified to Phosphotyrosine. Residues Ser55 and Ser56 each carry the phosphoserine modification. Tyr61 carries the phosphotyrosine modification. Phosphoserine is present on residues Ser66, Ser72, Ser73, Ser83, and Ser87. A coil 1A region spans residues 96–131 (FKNTRTNEKVELQELNDRFANYIDKVRFLEQQNKIL). Residues 96–131 (FKNTRTNEKVELQELNDRFANYIDKVRFLEQQNKIL) adopt a coiled-coil conformation. The region spanning 103 to 411 (EKVELQELND…KLLEGEESRI (309 aa)) is the IF rod domain. Residue Lys104 forms a Glycyl lysine isopeptide (Lys-Gly) (interchain with G-Cter in SUMO2) linkage. Tyr117 carries the post-translational modification Phosphotyrosine. Lys120, Lys129, and Lys139 each carry N6-acetyllysine; alternate. Residues Lys120 and Lys129 each carry the N6-succinyllysine; alternate modification. Glycyl lysine isopeptide (Lys-Gly) (interchain with G-Cter in SUMO2); alternate cross-links involve residues Lys120, Lys129, and Lys139. Residues 132-153 (LAELEQLKGQGKSRLGDLYEEE) are linker 1. Residue Ser144 is modified to Phosphoserine. Residues 154-245 (MRELRRQVDQ…KLHDEEIQEL (92 aa)) adopt a coiled-coil conformation. The tract at residues 154–245 (MRELRRQVDQ…KLHDEEIQEL (92 aa)) is coil 1B. The residue at position 168 (Lys168) is an N6-acetyllysine. Lys188 is modified (N6-acetyllysine; alternate). Lys188 carries the N6-succinyllysine; alternate modification. The residue at position 214 (Ser214) is a Phosphoserine. Lys223 bears the N6-acetyllysine; alternate mark. A Glycyl lysine isopeptide (Lys-Gly) (interchain with G-Cter in SUMO2); alternate cross-link involves residue Lys223. Ser226 is subject to Phosphoserine. Lys235 is modified (N6-acetyllysine). Residues 246–268 (QAQIQDQHVQIDMDVSKPDLTAA) are linker 12. Lys262 participates in a covalent cross-link: Glycyl lysine isopeptide (Lys-Gly) (interchain with G-Cter in SUMO2). The segment at 269 to 407 (LRDVRQQYES…ATYRKLLEGE (139 aa)) is coil 2. Lys294 carries the post-translational modification N6-acetyllysine; alternate. Lys294 carries the post-translational modification N6-succinyllysine; alternate. Residue Lys294 forms a Glycyl lysine isopeptide (Lys-Gly) (interchain with G-Cter in SUMO2); alternate linkage. Ser299 carries the post-translational modification Phosphoserine. Residues 303-407 (NRNNDALRQA…ATYRKLLEGE (105 aa)) adopt a coiled-coil conformation. Lys313 is covalently cross-linked (Glycyl lysine isopeptide (Lys-Gly) (interchain with G-Cter in SUMO2)). Ser325 is subject to Phosphoserine. The [IL]-x-C-x-x-[DE] motif motif lies at 326–329 (LTCE). Lys373 carries the post-translational modification N6-acetyllysine; alternate. Residue Lys373 forms a Glycyl lysine isopeptide (Lys-Gly) (interchain with G-Cter in SUMO2); alternate linkage. Positions 408–466 (ESRIALPLPNFSSLNLRETNLDSLPLVDTHSKRTLLIKTVETRDGQVINETSQHHDDLE) are tail. Phosphoserine is present on residues Ser409, Ser419, and Ser420. At Thr426 the chain carries Phosphothreonine. The residue at position 430 (Ser430) is a Phosphoserine. Residue Thr436 is modified to Phosphothreonine. Ser438 is subject to Phosphoserine. A Glycyl lysine isopeptide (Lys-Gly) (interchain with G-Cter in SUMO2) cross-link involves residue Lys439. Position 445 is an N6-acetyllysine; alternate (Lys445). An N6-succinyllysine; alternate modification is found at Lys445. Residue Lys445 forms a Glycyl lysine isopeptide (Lys-Gly) (interchain with G-Cter in SUMO2); alternate linkage. Lys445 is covalently cross-linked (Glycyl lysine isopeptide (Lys-Gly) (interchain with G-Cter in SUMO1); alternate). A phosphothreonine mark is found at Thr446 and Thr458. The residue at position 459 (Ser459) is a Phosphoserine.

This sequence belongs to the intermediate filament family. As to quaternary structure, homomer assembled from elementary dimers. Identified in complexes that contain VIM, EZR, AHNAK, BFSP1, BFSP2, ANK2, PLEC, PRX and spectrin. Interacts with BCAS3. Interacts with LGSN. Interacts with SYNM. Interacts (via rod region) with PLEC (via CH 1 domain). Interacts with STK33. Interacts with LARP6. Interacts with RAB8B. Interacts with TOR1A; the interaction associates TOR1A with the cytoskeleton. Interacts with TOR1AIP1. Interacts with TOR1AIP1. Interacts with DIAPH1. Interacts with EPPK1; interaction is dependent of higher-order structure of intermediate filament. Interacts with the non-receptor tyrosine kinase SRMS; the interaction leads to phosphorylation of VIM. Interacts with NOD2. Interacts (via head region) with CORO1C. Interacts with HDGF. Interacts with PRKCE (via phorbol-ester/DAG-type 2 domain). Interacts with BFSP2. Interacts with PPL. Interacts with PKP1 and PKP2. Interacts with SCRIB (via PDZ domains); the interaction protects SCRIB from proteasomal degradation and facilitates SCRIB localization to intermediate filaments, the interaction is reduced by cell contact inhibition. Filament disassembly during mitosis is promoted by phosphorylation at Ser-55 as well as by nestin. One of the most prominent phosphoproteins in various cells of mesenchymal origin. Phosphorylation is enhanced during cell division, at which time vimentin filaments are significantly reorganized. Phosphorylation by PKN1 inhibits the formation of filaments. Phosphorylated at Ser-56 by CDK5 during neutrophil secretion in the cytoplasm. Phosphorylated by STK33. Phosphorylated on tyrosine residues by SRMS. In terms of processing, O-glycosylated during cytokinesis at sites identical or close to phosphorylation sites, this interferes with the phosphorylation status. Post-translationally, S-nitrosylation is induced by interferon-gamma and oxidatively-modified low-densitity lipoprotein (LDL(ox)) possibly implicating the iNOS-S100A8/9 transnitrosylase complex.

It is found in the cytoplasm. It localises to the cytoskeleton. The protein resides in the nucleus matrix. Its subcellular location is the cell membrane. Vimentins are class-III intermediate filaments found in various non-epithelial cells, especially mesenchymal cells. Vimentin is attached to the nucleus, endoplasmic reticulum, and mitochondria, either laterally or terminally. Plays a role in cell directional movement, orientation, cell sheet organization and Golgi complex polarization at the cell migration front. Protects SCRIB from proteasomal degradation and facilitates its localization to intermediate filaments in a cell contact-mediated manner. Its function is as follows. Involved with LARP6 in the stabilization of type I collagen mRNAs for CO1A1 and CO1A2. This chain is Vimentin (VIM), found in Canis lupus familiaris (Dog).